The chain runs to 358 residues: tRNA (guanine-N(7)-)-methyltransferase (358 aa).

The interval 1–29 is disordered; the sequence is MTPPPPKRQKRDEYRKATAEATSQSGASD. S-adenosyl-L-methionine is bound by residues Gly99 and 122–123; that span reads EI. The span at 151–186 shows a compositional bias: low complexity; sequence TATAASETPSQQQAQIDGKQANANAAADAASPAPST. Positions 151 to 194 are disordered; it reads TATAASETPSQQQAQIDGKQANANAAADAASPAPSTDTEHMPTT. Residues 209–210 and Cys229 each bind S-adenosyl-L-methionine; that span reads NT. Residue Asp232 is part of the active site. 330–332 serves as a coordination point for S-adenosyl-L-methionine; sequence TEE.

The protein belongs to the class I-like SAM-binding methyltransferase superfamily. TrmB family. In terms of assembly, forms a complex with trm82.

It is found in the nucleus. It carries out the reaction guanosine(46) in tRNA + S-adenosyl-L-methionine = N(7)-methylguanosine(46) in tRNA + S-adenosyl-L-homocysteine. It participates in tRNA modification; N(7)-methylguanine-tRNA biosynthesis. Functionally, catalyzes the formation of N(7)-methylguanine at position 46 (m7G46) in tRNA. This Aspergillus fumigatus (strain CBS 144.89 / FGSC A1163 / CEA10) (Neosartorya fumigata) protein is tRNA (guanine-N(7)-)-methyltransferase (trm8).